The primary structure comprises 388 residues: Dual-specificity RNA methyltransferase RlmN (388 aa).

E109 acts as the Proton acceptor in catalysis. In terms of domain architecture, Radical SAM core spans 115-354 (EEDRATLCVS…TIVRKTRGDD (240 aa)). Residues C122 and C359 are joined by a disulfide bond. Positions 129, 133, and 136 each coordinate [4Fe-4S] cluster. Residues 183 to 184 (GE), S215, 237 to 239 (SLH), and N316 each bind S-adenosyl-L-methionine. C359 (S-methylcysteine intermediate) is an active-site residue.

It belongs to the radical SAM superfamily. RlmN family. Requires [4Fe-4S] cluster as cofactor.

Its subcellular location is the cytoplasm. It carries out the reaction adenosine(2503) in 23S rRNA + 2 reduced [2Fe-2S]-[ferredoxin] + 2 S-adenosyl-L-methionine = 2-methyladenosine(2503) in 23S rRNA + 5'-deoxyadenosine + L-methionine + 2 oxidized [2Fe-2S]-[ferredoxin] + S-adenosyl-L-homocysteine. The catalysed reaction is adenosine(37) in tRNA + 2 reduced [2Fe-2S]-[ferredoxin] + 2 S-adenosyl-L-methionine = 2-methyladenosine(37) in tRNA + 5'-deoxyadenosine + L-methionine + 2 oxidized [2Fe-2S]-[ferredoxin] + S-adenosyl-L-homocysteine. Its function is as follows. Specifically methylates position 2 of adenine 2503 in 23S rRNA and position 2 of adenine 37 in tRNAs. m2A2503 modification seems to play a crucial role in the proofreading step occurring at the peptidyl transferase center and thus would serve to optimize ribosomal fidelity. The chain is Dual-specificity RNA methyltransferase RlmN from Klebsiella pneumoniae (strain 342).